A 458-amino-acid polypeptide reads, in one-letter code: MDSVELCLPESFSLHYEEELLCRMSNKDRHIDSSCSSFIKTEPSSPASLTDSVNHHSPGGSSDASGSYSSTMNGHQNGLDSPPLYPSAPILGGSGPVRKLYDDCSSTIVEDPQTKCEYMLNSMPKRLCLVCGDIASGYHYGVASCEACKAFFKRTIQGNIEYSCPATNECEITKRRRKSCQACRFMKCLKVGMLKEGVRLDRVRGGRQKYKRRIDAENSPYLNPQLVQPAKKPYNKIVSHLLVAEPEKIYAMPDPTVPDSDIKALTTLCDLADRELVVIIGWAKHIPGFSTLSLADQMSLLQSAWMEILILGVVYRSLSFEDELVYADDYIMDEDQSKLAGLLDLNNAILQLVKKYKSMKLEKEEFVTLKAIALANSDSMHIEDVEAVQKLQDVLHEALQDYEAGQHMEDPRRAGKMLMTLPLLRQTSTKAVQHFYNIKLEGKVPMHKLFLEMLEAKV.

A Glycyl lysine isopeptide (Lys-Gly) (interchain with G-Cter in SUMO) cross-link involves residue Lys-40. Residues 42–52 are compositionally biased toward polar residues; sequence EPSSPASLTDS. The disordered stretch occupies residues 42–85; it reads EPSSPASLTDSVNHHSPGGSSDASGSYSSTMNGHQNGLDSPPLY. Phosphoserine is present on Ser-45. The segment covering 57–70 has biased composition (low complexity); that stretch reads SPGGSSDASGSYSS. Positions 125–200 form a DNA-binding region, nuclear receptor; that stretch reads KRLCLVCGDI…VGMLKEGVRL (76 aa). NR C4-type zinc fingers lie at residues 128–148 and 164–188; these read CLVCGDIASGYHYGVASCEAC and CPATNECEITKRRRKSCQACRFMKC. Residues 233–457 enclose the NR LBD domain; it reads PYNKIVSHLL…KLFLEMLEAK (225 aa).

The protein belongs to the nuclear hormone receptor family. NR3 subfamily. As to quaternary structure, homodimer. Binds TLE1, PNRC1 and PNRC2. Binds GRIP1. Interacts with NRIP1, NCOA1 and NCOR2. Post-translationally, acetylated by PCAF/KAT2 (in vitro). Sumoylation on Lys-40 is enhanced by phosphorylation at Ser-45 and represses transcriptional activity. In terms of processing, phosphorylation on Ser-45 enhances sumoylation on Lys-40 thus repressing transcriptional activity. Expressed in the heart, kidney, brain, lung, bone marrow, adrenal gland, trachea, spinal cord and thyroid gland.

It localises to the nucleus. Orphan receptor that acts as a transcription activator in the absence of bound ligand. Binds specifically to an estrogen response element and activates reporter genes controlled by estrogen response elements. Induces the expression of PERM1 in the skeletal muscle. The protein is Estrogen-related receptor gamma (ESRRG) of Homo sapiens (Human).